A 330-amino-acid polypeptide reads, in one-letter code: Protoheme IX farnesyltransferase (330 aa).

The next 9 membrane-spanning stretches (helical) occupy residues 30–50 (LVKP…MWMA), 58–78 (FFIT…INMV), 106–126 (LIFS…FTNL), 127–147 (LAAG…THWL), 155–175 (IVIG…ATTG), 182–202 (WVMF…LAIL), 228–248 (ILLY…PLGM), 249–269 (LGSF…WKAV), and 281–301 (AASL…AMGL).

The protein belongs to the UbiA prenyltransferase family. Protoheme IX farnesyltransferase subfamily.

The protein resides in the cell inner membrane. The catalysed reaction is heme b + (2E,6E)-farnesyl diphosphate + H2O = Fe(II)-heme o + diphosphate. Its pathway is porphyrin-containing compound metabolism; heme O biosynthesis; heme O from protoheme: step 1/1. Converts heme B (protoheme IX) to heme O by substitution of the vinyl group on carbon 2 of heme B porphyrin ring with a hydroxyethyl farnesyl side group. The protein is Protoheme IX farnesyltransferase of Synechococcus sp. (strain JA-2-3B'a(2-13)) (Cyanobacteria bacterium Yellowstone B-Prime).